A 250-amino-acid polypeptide reads, in one-letter code: Cell division protein ZapD (250 aa).

This sequence belongs to the ZapD family. In terms of assembly, interacts with FtsZ.

It is found in the cytoplasm. In terms of biological role, cell division factor that enhances FtsZ-ring assembly. Directly interacts with FtsZ and promotes bundling of FtsZ protofilaments, with a reduction in FtsZ GTPase activity. The chain is Cell division protein ZapD from Yersinia enterocolitica serotype O:8 / biotype 1B (strain NCTC 13174 / 8081).